The chain runs to 257 residues: Small ribosomal subunit protein uS2 (257 aa).

The interval 237-257 (MDEADGSEAEPEDPAAPESAE) is disordered. The segment covering 240-257 (ADGSEAEPEDPAAPESAE) has biased composition (acidic residues).

It belongs to the universal ribosomal protein uS2 family.

The protein is Small ribosomal subunit protein uS2 of Chlorobium phaeovibrioides (strain DSM 265 / 1930) (Prosthecochloris vibrioformis (strain DSM 265)).